The chain runs to 329 residues: Ferredoxin--NADP reductase 2 (329 aa).

T18, E37, Q45, Y50, V90, F124, D285, and S326 together coordinate FAD.

This sequence belongs to the ferredoxin--NADP reductase type 2 family. As to quaternary structure, homodimer. FAD is required as a cofactor.

It catalyses the reaction 2 reduced [2Fe-2S]-[ferredoxin] + NADP(+) + H(+) = 2 oxidized [2Fe-2S]-[ferredoxin] + NADPH. This is Ferredoxin--NADP reductase 2 from Bacillus mycoides (strain KBAB4) (Bacillus weihenstephanensis).